A 379-amino-acid polypeptide reads, in one-letter code: UDP-N-acetylglucosamine--N-acetylmuramyl-(pentapeptide) pyrophosphoryl-undecaprenol N-acetylglucosamine transferase (379 aa).

UDP-N-acetyl-alpha-D-glucosamine is bound by residues threonine 17–glycine 19, asparagine 128, arginine 169, serine 197, and glutamine 298.

It belongs to the glycosyltransferase 28 family. MurG subfamily.

The protein resides in the cell inner membrane. It carries out the reaction di-trans,octa-cis-undecaprenyl diphospho-N-acetyl-alpha-D-muramoyl-L-alanyl-D-glutamyl-meso-2,6-diaminopimeloyl-D-alanyl-D-alanine + UDP-N-acetyl-alpha-D-glucosamine = di-trans,octa-cis-undecaprenyl diphospho-[N-acetyl-alpha-D-glucosaminyl-(1-&gt;4)]-N-acetyl-alpha-D-muramoyl-L-alanyl-D-glutamyl-meso-2,6-diaminopimeloyl-D-alanyl-D-alanine + UDP + H(+). It participates in cell wall biogenesis; peptidoglycan biosynthesis. In terms of biological role, cell wall formation. Catalyzes the transfer of a GlcNAc subunit on undecaprenyl-pyrophosphoryl-MurNAc-pentapeptide (lipid intermediate I) to form undecaprenyl-pyrophosphoryl-MurNAc-(pentapeptide)GlcNAc (lipid intermediate II). This chain is UDP-N-acetylglucosamine--N-acetylmuramyl-(pentapeptide) pyrophosphoryl-undecaprenol N-acetylglucosamine transferase, found in Brucella abortus (strain S19).